Consider the following 597-residue polypeptide: Scarecrow-like protein 5 (597 aa).

The tract at residues E111–N172 is disordered. Positions N123 to S169 are enriched in low complexity. One can recognise a GRAS domain in the interval S218–R597. Positions G225–S285 are leucine repeat I (LRI). A VHIID region spans residues M304–G369. The short motif at V335 to D339 is the VHIID element. Positions L385 to K417 are leucine repeat II (LRII). Residues L426 to N520 are PFYRE. Positions A523–R597 are SAW.

Belongs to the GRAS family. As to expression, expressed in seedlings, roots, shoots, leaves, flowers and siliques.

Its subcellular location is the nucleus. In terms of biological role, probable transcription factor involved in plant development. The chain is Scarecrow-like protein 5 (SCL5) from Arabidopsis thaliana (Mouse-ear cress).